We begin with the raw amino-acid sequence, 333 residues long: MLRVFIFFVFLGSGLTGRIKPQITCKYFISENNTWYKYNVTILNSTIVLPAYNTIPSNAAGISCTCHDIDYLQKNNISIHYNTSILKTFQDIRIIRCGMKNISEIAGGFGKELKFLDLRYNDLQVIEYNILRKLIRSNTPTYLYYNNLMCGKRNCPLYYFLLKQEQTYLKLLPQFFLRRINFSNNNTYLYHFLSCGNKPGHEFLEYQTKYCRTKFPEINITVNQLTAKKNTERYKSCYPLVFISILCSCISFLFLFICLLRSICKKYSCTKQGKSGHNSGHNYIPLIPSYTFSLKKHRHPETAVVEDHTTSANSPIVYIPTTEEKKVSCSRRK.

The signal sequence occupies residues 1–31 (MLRVFIFFVFLGSGLTGRIKPQITCKYFISE). Residues N32, N39, N44, N76, N82, and N101 are each glycosylated (N-linked (GlcNAc...) asparagine; by host). At 32–239 (NNTWYKYNVT…NTERYKSCYP (208 aa)) the chain is on the extracellular side. The LRR repeat unit spans residues 112–133 (ELKFLDLRYNDLQVIEYNILRK). N-linked (GlcNAc...) asparagine; by host glycosylation is found at N181, N185, and N219. C195 and C237 are disulfide-bonded. A helical membrane pass occupies residues 240 to 260 (LVFISILCSCISFLFLFICLL). Residues 261–333 (RSICKKYSCT…EKKVSCSRRK (73 aa)) are Cytoplasmic-facing.

Belongs to the asfivirus I329L family. In terms of processing, highly glycosylated.

It is found in the host endoplasmic reticulum membrane. The protein localises to the host Golgi apparatus membrane. Viral TLR3 homolog that probably prevents TLR3 dimerization and subsequent induction of IFN. Inhibits dsRNA-stimulated activation of NF-kB and IRF3. In Ornithodoros (relapsing fever ticks), this protein is Transmembrane protein I329L.